Here is a 321-residue protein sequence, read N- to C-terminus: Lipoyl synthase (321 aa).

Positions 68, 73, 79, 94, 98, 101, and 308 each coordinate [4Fe-4S] cluster. A Radical SAM core domain is found at 80 to 297; sequence FNHGTATFMI…KVLADELGFT (218 aa).

The protein belongs to the radical SAM superfamily. Lipoyl synthase family. [4Fe-4S] cluster is required as a cofactor.

Its subcellular location is the cytoplasm. It carries out the reaction [[Fe-S] cluster scaffold protein carrying a second [4Fe-4S](2+) cluster] + N(6)-octanoyl-L-lysyl-[protein] + 2 oxidized [2Fe-2S]-[ferredoxin] + 2 S-adenosyl-L-methionine + 4 H(+) = [[Fe-S] cluster scaffold protein] + N(6)-[(R)-dihydrolipoyl]-L-lysyl-[protein] + 4 Fe(3+) + 2 hydrogen sulfide + 2 5'-deoxyadenosine + 2 L-methionine + 2 reduced [2Fe-2S]-[ferredoxin]. Its pathway is protein modification; protein lipoylation via endogenous pathway; protein N(6)-(lipoyl)lysine from octanoyl-[acyl-carrier-protein]: step 2/2. Functionally, catalyzes the radical-mediated insertion of two sulfur atoms into the C-6 and C-8 positions of the octanoyl moiety bound to the lipoyl domains of lipoate-dependent enzymes, thereby converting the octanoylated domains into lipoylated derivatives. This is Lipoyl synthase from Shewanella denitrificans (strain OS217 / ATCC BAA-1090 / DSM 15013).